Consider the following 402-residue polypeptide: LIM/homeobox protein Lhx5 (402 aa).

LIM zinc-binding domains lie at 3-61 and 62-125; these read VHCA…RRFG and TKCA…SSSL. Over residues 124–135 the composition is skewed to low complexity; that stretch reads SLKEGSLNSVSS. Disordered stretches follow at residues 124-186 and 298-402; these read SLKE…PRTT and HGPP…AAVW. The span at 151–167 shows a compositional bias: basic and acidic residues; that stretch reads DDPKETDNSTSSDKETA. Positions 180–239 form a DNA-binding region, homeobox; the sequence is RRGPRTTIKAKQLETLKAAFAATPKPTRHIREQLAQETGLNMRVIQVWFQNRRSKERRMK. 2 stretches are compositionally biased toward low complexity: residues 300–311 and 322–336; these read PPSQAQSPADSS and PLGA…PHAA.

In terms of tissue distribution, expressed in fetal brain and in various regions of the adult central nervous system including the spinal cord, the thalamus, and the cerebellum.

It is found in the nucleus. In terms of biological role, plays an essential role in the regulation of neuronal differentiation and migration during development of the central nervous system. This chain is LIM/homeobox protein Lhx5 (LHX5), found in Homo sapiens (Human).